Reading from the N-terminus, the 598-residue chain is uncharacterized protein (598 aa).

Mn(2+) contacts are provided by D397, D408, E506, and E520.

The protein belongs to the peptidase M24B family. Requires Mn(2+) as cofactor.

This is an uncharacterized protein from Schizosaccharomyces pombe (strain 972 / ATCC 24843) (Fission yeast).